A 77-amino-acid chain; its full sequence is Small ribosomal subunit protein bS18 (77 aa).

Belongs to the bacterial ribosomal protein bS18 family. As to quaternary structure, part of the 30S ribosomal subunit. Forms a tight heterodimer with protein bS6.

Functionally, binds as a heterodimer with protein bS6 to the central domain of the 16S rRNA, where it helps stabilize the platform of the 30S subunit. The chain is Small ribosomal subunit protein bS18 from Halalkalibacterium halodurans (strain ATCC BAA-125 / DSM 18197 / FERM 7344 / JCM 9153 / C-125) (Bacillus halodurans).